A 400-amino-acid chain; its full sequence is Acetate kinase (400 aa).

Asn-10 provides a ligand contact to Mg(2+). Residue Lys-17 participates in ATP binding. Arg-91 contributes to the substrate binding site. Asp-150 acts as the Proton donor/acceptor in catalysis. Residues 210-214 (HLGNG), 285-287 (DCR), and 333-337 (GIGEN) contribute to the ATP site. Glu-387 lines the Mg(2+) pocket.

This sequence belongs to the acetokinase family. Homodimer. It depends on Mg(2+) as a cofactor. Mn(2+) is required as a cofactor.

The protein localises to the cytoplasm. It catalyses the reaction acetate + ATP = acetyl phosphate + ADP. Its pathway is metabolic intermediate biosynthesis; acetyl-CoA biosynthesis; acetyl-CoA from acetate: step 1/2. Functionally, catalyzes the formation of acetyl phosphate from acetate and ATP. Can also catalyze the reverse reaction. This chain is Acetate kinase, found in Yersinia pseudotuberculosis serotype I (strain IP32953).